A 264-amino-acid polypeptide reads, in one-letter code: Potassium channel regulatory protein (264 aa).

One can recognise a BTB domain in the interval 5-74; that stretch reads DLVTLNVGGR…LRNHELLLPS (70 aa).

Can form homooligomers. Interacts with KCNA1 (via cytoplasmic N-terminal domain) and KCNA4.

Its subcellular location is the endoplasmic reticulum. Inhibits potassium fluxes in cells. May regulate Kv1 family channel proteins by retaining a fraction of channels in endomembranes. In Mus musculus (Mouse), this protein is Potassium channel regulatory protein (Kcnrg).